Reading from the N-terminus, the 420-residue chain is Glucose-1-phosphate adenylyltransferase (420 aa).

Alpha-D-glucose 1-phosphate contacts are provided by residues Tyr107, Gly172, 187 to 188 (EK), and Ser205.

It belongs to the bacterial/plant glucose-1-phosphate adenylyltransferase family. Homotetramer.

It catalyses the reaction alpha-D-glucose 1-phosphate + ATP + H(+) = ADP-alpha-D-glucose + diphosphate. Its pathway is glycan biosynthesis; glycogen biosynthesis. Its function is as follows. Involved in the biosynthesis of ADP-glucose, a building block required for the elongation reactions to produce glycogen. Catalyzes the reaction between ATP and alpha-D-glucose 1-phosphate (G1P) to produce pyrophosphate and ADP-Glc. The polypeptide is Glucose-1-phosphate adenylyltransferase (Rhodopseudomonas palustris (strain BisB18)).